Consider the following 514-residue polypeptide: Probable lipid II flippase MurJ (514 aa).

14 helical membrane-spanning segments follow: residues 3 to 23 (ILKS…FGFF), 25 to 45 (DVLI…FIAF), 92 to 112 (ILVL…IIFI), 130 to 150 (LLKI…CSSI), 157 to 177 (FFIP…FSFF), 186 to 206 (IISL…YQFP), 245 to 265 (ISLI…ISWI), 271 to 291 (LIEF…FTSF), 315 to 335 (LILS…LVII), 354 to 374 (LELY…VSAF), 386 to 406 (ISIL…FYFQ), 409 to 429 (GLAL…YWKL), 448 to 468 (LLIA…FIPS), and 481 to 501 (LFTI…FLGI).

It belongs to the MurJ/MviN family.

The protein resides in the cell inner membrane. It participates in cell wall biogenesis; peptidoglycan biosynthesis. In terms of biological role, involved in peptidoglycan biosynthesis. Transports lipid-linked peptidoglycan precursors from the inner to the outer leaflet of the cytoplasmic membrane. The polypeptide is Probable lipid II flippase MurJ (Buchnera aphidicola subsp. Schizaphis graminum (strain Sg)).